A 93-amino-acid chain; its full sequence is Parbolysin P1 (93 aa).

Cystine bridges form between cysteine 16/cysteine 37, cysteine 22/cysteine 33, and cysteine 47/cysteine 60.

The protein belongs to the worm cytolysin family. As to expression, localized within the skin and proboscis and are most readily isolated from body mucus secretions.

The protein resides in the secreted. Functionally, cytolysin that shows hemolytic activity (on bovine erythrocytes, HC(50)=5.75 mg/ml). This hemolytic activity is completely inhibited by small unilamelar vesicles composed of PC/PG, PC/PI and PC/PS in 1:1 molar ratios (with at least 100 mg/ml concentration). The recombinant protein does not show hemolytic activity, suggesting that it is not properly folded or that it requires a free N-terminal end for its activity. The sequence is that of Parbolysin P1 from Parborlasia corrugatus (Antarctic nemertean worm).